A 411-amino-acid chain; its full sequence is Tyrosine--tRNA ligase (411 aa).

Tyr33 lines the L-tyrosine pocket. The 'HIGH' region motif lies at 38 to 47; sequence PTADSLHLGN. L-tyrosine is bound by residues Tyr160 and Gln164. The 'KMSKS' region signature appears at 222–226; sequence KFGKS. Residue Lys225 coordinates ATP. Residues 346–410 form the S4 RNA-binding domain; the sequence is VNLVNFLVEN…GKKKILICKV (65 aa).

Belongs to the class-I aminoacyl-tRNA synthetase family. TyrS type 1 subfamily. Homodimer.

The protein localises to the cytoplasm. It carries out the reaction tRNA(Tyr) + L-tyrosine + ATP = L-tyrosyl-tRNA(Tyr) + AMP + diphosphate + H(+). Catalyzes the attachment of tyrosine to tRNA(Tyr) in a two-step reaction: tyrosine is first activated by ATP to form Tyr-AMP and then transferred to the acceptor end of tRNA(Tyr). This is Tyrosine--tRNA ligase from Mycoplasmopsis synoviae (strain 53) (Mycoplasma synoviae).